A 448-amino-acid polypeptide reads, in one-letter code: Probable glycine dehydrogenase (decarboxylating) subunit 1 (448 aa).

It belongs to the GcvP family. N-terminal subunit subfamily. The glycine cleavage system is composed of four proteins: P, T, L and H. In this organism, the P 'protein' is a heterodimer of two subunits.

It carries out the reaction N(6)-[(R)-lipoyl]-L-lysyl-[glycine-cleavage complex H protein] + glycine + H(+) = N(6)-[(R)-S(8)-aminomethyldihydrolipoyl]-L-lysyl-[glycine-cleavage complex H protein] + CO2. Its function is as follows. The glycine cleavage system catalyzes the degradation of glycine. The P protein binds the alpha-amino group of glycine through its pyridoxal phosphate cofactor; CO(2) is released and the remaining methylamine moiety is then transferred to the lipoamide cofactor of the H protein. In Geobacillus sp. (strain WCH70), this protein is Probable glycine dehydrogenase (decarboxylating) subunit 1.